The chain runs to 390 residues: 3-ketoacyl-CoA thiolase (390 aa).

Catalysis depends on Cys95, which acts as the Acyl-thioester intermediate. Catalysis depends on proton acceptor residues His346 and Cys376.

Belongs to the thiolase-like superfamily. Thiolase family. As to quaternary structure, heterotetramer of two alpha chains (FadB) and two beta chains (FadA).

The protein resides in the cytoplasm. The enzyme catalyses an acyl-CoA + acetyl-CoA = a 3-oxoacyl-CoA + CoA. It functions in the pathway lipid metabolism; fatty acid beta-oxidation. Catalyzes the final step of fatty acid oxidation in which acetyl-CoA is released and the CoA ester of a fatty acid two carbons shorter is formed. This Acinetobacter baumannii (strain AB307-0294) protein is 3-ketoacyl-CoA thiolase.